Here is a 362-residue protein sequence, read N- to C-terminus: Probable secreted beta-glucosidase UTH1 (362 aa).

The first 17 residues, 1–17 (MKLSALLALSASTAVLA), serve as a signal peptide directing secretion.

Belongs to the SUN family.

The protein localises to the mitochondrion outer membrane. It localises to the secreted. The protein resides in the cell wall. Functionally, involved in aging, oxidative stress response, and in the regulation of mitochondrial biogenesis. Inactivation of UTH1 increases life span, leads to higher resistance to heat stress and to hydrogen peroxide, and increases sensitivity to the superoxide radical-generating drug paraquat and to copper. Also required for the selective autophagic degradation of mitochondria (mitophagy) in response to nitrogen starvation. May play a role in cell wall morphogenesis and septation. Involved in the remodeling of the cell wall during the various phases of yeast culture development and under various environmental conditions and plays a role in septation. Involved in cell sensitivity to boric acid. This Saccharomyces cerevisiae (strain YJM789) (Baker's yeast) protein is Probable secreted beta-glucosidase UTH1 (UTH1).